Reading from the N-terminus, the 102-residue chain is Urease subunit beta (102 aa).

It belongs to the urease beta subunit family. Heterotrimer of UreA (gamma), UreB (beta) and UreC (alpha) subunits. Three heterotrimers associate to form the active enzyme.

The protein resides in the cytoplasm. It carries out the reaction urea + 2 H2O + H(+) = hydrogencarbonate + 2 NH4(+). It functions in the pathway nitrogen metabolism; urea degradation; CO(2) and NH(3) from urea (urease route): step 1/1. This Blochmanniella pennsylvanica (strain BPEN) protein is Urease subunit beta.